We begin with the raw amino-acid sequence, 209 residues long: Peptide methionine sulfoxide reductase MsrA (209 aa).

Residue Cys14 is part of the active site. The tract at residues 183–209 is disordered; sequence FSALTTGGNQPGARGGLTNNTCQHPRH. Residues 199 to 209 show a composition bias toward polar residues; the sequence is LTNNTCQHPRH.

The protein belongs to the MsrA Met sulfoxide reductase family.

The catalysed reaction is L-methionyl-[protein] + [thioredoxin]-disulfide + H2O = L-methionyl-(S)-S-oxide-[protein] + [thioredoxin]-dithiol. The enzyme catalyses [thioredoxin]-disulfide + L-methionine + H2O = L-methionine (S)-S-oxide + [thioredoxin]-dithiol. Has an important function as a repair enzyme for proteins that have been inactivated by oxidation. Catalyzes the reversible oxidation-reduction of methionine sulfoxide in proteins to methionine. The sequence is that of Peptide methionine sulfoxide reductase MsrA from Pseudomonas fluorescens.